A 419-amino-acid polypeptide reads, in one-letter code: NF-kappa-B essential modulator (419 aa).

Residues 1-46 (MSRTPWKSQPCEMVQPSGGPAGDQDVLGEESSLGKPTMLHLPSEQG) form a disordered region. Residues 1–197 (MSRTPWKSQP…REALQQQHSV (197 aa)) are required for interaction with and ubiquitination by MARCHF2. Phosphoserine occurs at positions 31, 43, 68, and 85. An interaction with CHUK/IKBKB region spans residues 44–111 (EQGAPETFQR…RLVERLSLEK (68 aa)). A coiled-coil region spans residues 100–353 (ARRLVERLSL…KTSCQESARI (254 aa)). Residues Lys-111, Lys-139, Lys-143, Lys-226, Lys-246, and Lys-264 each participate in a glycyl lysine isopeptide (Lys-Gly) (interchain with G-Cter in ubiquitin) cross-link. Residues 150–257 (LGELQESQSR…SVVSSERNRG (108 aa)) are interaction with TANK. The ubiquitin-binding (UBAN) stretch occupies residues 242 to 350 (DNHIKSSVVS…SRLKTSCQES (109 aa)). A self-association region spans residues 246 to 365 (KSSVVSSERN…MRKRHVEVSQ (120 aa)). Residues 251–419 (SSERNRGLQL…LQIHVMECIE (169 aa)) are required for interaction with TNFAIP3. Lys-277 participates in a covalent cross-link: Glycyl lysine isopeptide (Lys-Gly) (interchain with G-Cter in SUMO); alternate. Residue Lys-277 forms a Glycyl lysine isopeptide (Lys-Gly) (interchain with G-Cter in ubiquitin); alternate linkage. Residues Lys-283, Lys-285, Lys-292, and Lys-302 each participate in a glycyl lysine isopeptide (Lys-Gly) (interchain with G-Cter in ubiquitin) cross-link. Lys-309 participates in a covalent cross-link: Glycyl lysine isopeptide (Lys-Gly) (interchain with G-Cter in SUMO); alternate. A Glycyl lysine isopeptide (Lys-Gly) (interchain with G-Cter in ubiquitin); alternate cross-link involves residue Lys-309. Positions 322-343 (LAERKELLQEQLEQLQREYSRL) are leucine-zipper. Lys-326 is covalently cross-linked (Glycyl lysine isopeptide (Lys-Gly) (interchain with G-Cter in ubiquitin)). Positions 363-394 (VSQPTLPPAPAHHSFHPALPSQRRSPPEEPPN) are disordered. Phosphoserine is present on residues Ser-376 and Ser-387. The interval 382 to 419 (PSQRRSPPEEPPNFCCPKCQYQAPDMDTLQIHVMECIE) is interaction with CYLD. Residues 389 to 419 (PEEPPNFCCPKCQYQAPDMDTLQIHVMECIE) form a CCHC NOA-type zinc finger. Residue Cys-397 participates in Zn(2+) binding. A Glycyl lysine isopeptide (Lys-Gly) (interchain with G-Cter in ubiquitin) cross-link involves residue Lys-399. 3 residues coordinate Zn(2+): Cys-400, His-413, and Cys-417.

As to quaternary structure, homodimer; disulfide-linked. Component of the I-kappa-B-kinase (IKK) core complex consisting of CHUK, IKBKB and IKBKG; probably four alpha/CHUK-beta/IKBKB dimers are associated with four gamma/IKBKG subunits. The IKK core complex seems to associate with regulatory or adapter proteins to form a IKK-signalosome holo-complex. The IKK complex associates with TERF2IP/RAP1, leading to promote IKK-mediated phosphorylation of RELA/p65. Part of a complex composed of NCOA2, NCOA3, CHUK/IKKA, IKBKB, IKBKG and CREBBP. Interacts with COPS3, CYLD, NALP2, TRPC4AP and PIDD1. Interacts with ATM; the complex is exported from the nucleus. Interacts with TRAF6. Interacts with IKBKE. Interacts with TANK; the interaction is enhanced by IKBKE and TBK1. Part of a ternary complex consisting of TANK, IKBKB and IKBKG. Interacts with ZFAND5. Interacts with RIPK2. Interacts with TNIP1 and TNFAIP3; TNIP1 facilitates the TNFAIP3-mediated de-ubiquitination of IKBKG. Interacts with TNFAIP3; the interaction is induced by TNF stimulation and by polyubiquitin. Binds (via UBAN region) polyubiquitin; binds both 'Lys-63'-linked and linear polyubiquitin, with higher affinity for linear ubiquitin. Interacts with NLRP10. Interacts with TANK; this interaction increases in response to DNA damage. Interacts with USP10; this interaction increases in response to DNA damage. Interacts with ZC3H12A; this interaction increases in response to DNA damage. Interacts with IFIT5; the interaction synergizes the recruitment of IKK to MAP3K7 and enhances IKK phosphorylation. Interacts with TRIM29; this interaction induces IKBKG/NEMO ubiquitination and proteolytic degradation. Interacts with TRIM13; this interaction leads to IKBKG/NEMO ubiquitination. Interacts with ARFIP2. Interacts with RIPK1. Interacts with (ubiquitinated) BCL10; interaction with polyubiquitinated BCL10 via both 'Lys-63'-linked and linear ubiquitin is required for TCR-induced NF-kappa-B activation. Interacts with MARCHF2; during the late stages of macrophage viral and bacterial infection; the interaction leads to ubiquitination and degradation of IKBKG/NEMO. Phosphorylation at Ser-68 attenuates aminoterminal homodimerization. In terms of processing, polyubiquitinated on Lys-285 via 'Lys-63'-linked ubiquitin; the ubiquitination is mediated downstream of NOD2 and RIPK2 and probably plays a role in signaling by facilitating interactions with ubiquitin domain-containing proteins and activates the NF-kappa-B pathway. Polyubiquitinated on Lys-285 and Lys-399 through 'Lys-63'-linked ubiquitin; the ubiquitination is mediated by BCL10, MALT1 and TRAF6 and probably plays a role in signaling by facilitating interactions with ubiquitin domain-containing proteins and activates the NF-kappa-B pathway. Monoubiquitinated on Lys-277 and Lys-309; promotes nuclear export. Polyubiquitinated through 'Lys-27' by TRIM23; involved in antiviral innate and inflammatory responses. Linear polyubiquitinated on Lys-111, Lys-143, Lys-226, Lys-246, Lys-264, Lys-277, Lys-285, Lys-292, Lys-302, Lys-309 and Lys-326; the head-to-tail polyubiquitination is mediated by the LUBAC complex and plays a key role in NF-kappa-B activation. Deubiquitinated by USP10 in a TANK-dependent and -independent manner, leading to the negative regulation of NF-kappa-B signaling upon DNA damage. Ubiquitinated at Lys-326 by MARCHF2 following bacterial and viral infection which leads to its degradation. Post-translationally, sumoylated on Lys-277 and Lys-309 with SUMO1; the modification results in phosphorylation of Ser-85 by ATM leading to a replacement of the sumoylation by mono-ubiquitination on these residues. Neddylated by TRIM40, resulting in stabilization of NFKBIA and down-regulation of NF-kappa-B activity. In terms of processing, (Microbial infection) Cleaved by porcine reproductive and respiratory syndrome virus serine protease nsp4 after Glu-349. The cleavage inhibits NEMO proper function.

The protein resides in the cytoplasm. Its subcellular location is the nucleus. In terms of biological role, regulatory subunit of the IKK core complex which phosphorylates inhibitors of NF-kappa-B thus leading to the dissociation of the inhibitor/NF-kappa-B complex and ultimately the degradation of the inhibitor. Its binding to scaffolding polyubiquitin plays a key role in IKK activation by multiple signaling receptor pathways. Can recognize and bind both 'Lys-63'-linked and linear polyubiquitin upon cell stimulation, with a much highr affinity for linear polyubiquitin. Could be implicated in NF-kappa-B-mediated protection from cytokine toxicity. Essential for viral activation of IRF3. Involved in TLR3- and IFIH1-mediated antiviral innate response; this function requires 'Lys-27'-linked polyubiquitination. This Sus scrofa (Pig) protein is NF-kappa-B essential modulator (IKBKG).